A 130-amino-acid chain; its full sequence is MPATNILANLFVTLYNTEARRRGDCQVYPTSKLGVEVLGTLKKAGYIGEFEHVEDSRGGKFSVHLLAKITKCGAISPRFKVKKGEYTFWEQQYLPSYDRGMLVVTTNQGVMSHHEAAERGIGGFLIGYVY.

The protein belongs to the universal ribosomal protein uS8 family. As to quaternary structure, part of the 30S ribosomal subunit.

Functionally, one of the primary rRNA binding proteins, it binds directly to 16S rRNA central domain where it helps coordinate assembly of the platform of the 30S subunit. The sequence is that of Small ribosomal subunit protein uS8 from Cenarchaeum symbiosum (strain A).